Here is a 287-residue protein sequence, read N- to C-terminus: PsbP domain-containing protein 1, chloroplastic (287 aa).

It belongs to the PsbP family. As to quaternary structure, partially associated with photosystem I (PSI) complex, but is not a subunit of the complex. Interacts with PsaA and PsaB, but not with PasF.

The protein resides in the plastid. It localises to the chloroplast thylakoid lumen. In terms of biological role, photosystem I assembly factor that assists the proper folding and integration of PsaB and PsaA into the thylakoid membrane. This chain is PsbP domain-containing protein 1, chloroplastic (PPD1), found in Arabidopsis thaliana (Mouse-ear cress).